The following is a 1397-amino-acid chain: ABC transporter G family member 41 (1397 aa).

One can recognise an ABC transporter 1 domain in the interval 138–411 (SLSKFVCSKK…FEGCGFKCPE (274 aa)). ATP is bound at residue 171–178 (GPPGCGKT). Positions 489 to 701 (EMLKACSRRE…AEIGLTANEF (213 aa)) constitute an ABC transmembrane type-2 1 domain. 6 helical membrane-spanning segments follow: residues 507–527 (FIYLFKSGLLVFNALVTMTVF), 549–570 (ALFRLLADGLPELTLTISRLGV), 594–614 (IPLSVLDSFIWTVLTYYVIGY), 625–645 (FIILLTFHLSCISMFRAIASI), 651–671 (ACSITGAISVLLLALFGGFVI), and 735–755 (TAFGALVGFVLFFNALYTLAL). The 246-residue stretch at 805–1050 (VTFQNVQYYI…VIKYFESIPG (246 aa)) folds into the ABC transporter 2 domain. ATP is bound at residue 842–849 (GVSGAGKT). In terms of domain architecture, ABC transmembrane type-2 2 spans 1122-1336 (GQLKACLWKQ…VLEGLLSSQY (215 aa)). 7 helical membrane-spanning segments follow: residues 1141 to 1161 (HNLTRIVFILLNSLLCSLLFW), 1173 to 1193 (LFSIFGSMYTIVIFSGINNCA), 1229 to 1249 (VPYSLLQSLLCTIIVYPMIGY), 1260 to 1280 (LYSIFCSLLIFNYCGMLMVAL), 1286 to 1306 (MALTLRSTFFSMVNLFAGFVM), 1314 to 1334 (WWIWMYYLSPTSWVLEGLLSS), and 1369 to 1389 (VVAFVLIAFPIIVASLFAFFM).

This sequence belongs to the ABC transporter superfamily. ABCG family. PDR (TC 3.A.1.205) subfamily. In terms of tissue distribution, confined to roots.

The protein localises to the membrane. Its function is as follows. May be a general defense protein. This is ABC transporter G family member 41 (ABCG41) from Arabidopsis thaliana (Mouse-ear cress).